Reading from the N-terminus, the 83-residue chain is Small ribosomal subunit protein bS16c (83 aa).

The protein belongs to the bacterial ribosomal protein bS16 family.

It localises to the plastid. The protein localises to the chloroplast. The sequence is that of Small ribosomal subunit protein bS16c from Chaetosphaeridium globosum (Charophycean green alga).